Reading from the N-terminus, the 355-residue chain is Probable NADPH-dependent quinone reductase tdiC (355 aa).

Belongs to the zinc-containing alcohol dehydrogenase family. NADPH serves as cofactor.

It functions in the pathway secondary metabolite biosynthesis. Its function is as follows. Probable NADPH-dependent quinone reductase; part of the gene cluster that mediates the biosynthesis of terrequinone A, an antitumor agent. The first step in the biosynthetic pathway for terrequinone A is formation of indole pyruvic acid (IPA) from L-tryptophan by the aminotransferase tdiD. The nonribosomal peptide synthase tdiA then immediately converts unstable IPA to didemethylasterriquinone D (DDAQ D), via condensation of 2 IPA molecules. The symmetric connectivity of the 2 IPA molecules is thought to arise by head-to-tail dual Claisen condensations facilitated by the TE domain. TdiB then catalyzes reverse prenylation by transferring dimethylallyl diphosphate to carbon atom 2' of DDAQ D, to yield asterriquinone C-1. Finally, tdiC and tdiE enzymes robustly convert asterriquinone C-1 to terrequinone A via a transformation involving regular prenylation at carbon atom 5, which requires elimination of the hydroxy group on C-5. This is Probable NADPH-dependent quinone reductase tdiC from Emericella nidulans (strain FGSC A4 / ATCC 38163 / CBS 112.46 / NRRL 194 / M139) (Aspergillus nidulans).